The sequence spans 1151 residues: PPi-type phosphoenolpyruvate carboxykinase 1 (1151 aa).

A coiled-coil region spans residues 1083–1129; the sequence is RQKLEVAKLNKDLAYLNKTIAEKPRLAETLNKQIAAVKEELQYVSSE.

Belongs to the PPi-type phosphoenolpyruvate carboxykinase family. In terms of assembly, monomer and trimer; forms heterotrimers with PEPCK2 and PEPCK3.

The protein resides in the cytoplasm. The protein localises to the cytosol. The catalysed reaction is oxaloacetate + diphosphate = phosphoenolpyruvate + phosphate + CO2. Its function is as follows. Inorganic pyrophosphate (PPi)-dependent phosphoenolpyruvate carboxykinase, which regulates the carbon flow of the central metabolism by fixing CO(2) to phosphoenolpyruvate to produce oxaloacetate. Can also produce pyruvate and diphosphate from phosphoenolpyruvate and phosphate. The polypeptide is PPi-type phosphoenolpyruvate carboxykinase 1 (Entamoeba histolytica (strain ATCC 30459 / HM-1:IMSS / ABRM)).